The primary structure comprises 149 residues: Large ribosomal subunit protein uL22c (149 aa).

Belongs to the universal ribosomal protein uL22 family. As to quaternary structure, part of the 50S ribosomal subunit.

It localises to the plastid. The protein localises to the chloroplast. In terms of biological role, this protein binds specifically to 23S rRNA. Functionally, the globular domain of the protein is located near the polypeptide exit tunnel on the outside of the subunit, while an extended beta-hairpin is found that lines the wall of the exit tunnel in the center of the 70S ribosome. This chain is Large ribosomal subunit protein uL22c (rpl22), found in Brachypodium distachyon (Purple false brome).